The chain runs to 328 residues: P2Y purinoceptor 6 (328 aa).

Residues 1–27 (MEQDNGTIQAPGLPPTTCVYREDFKRL) lie on the Extracellular side of the membrane. Asn5 is a glycosylation site (N-linked (GlcNAc...) asparagine). A helical transmembrane segment spans residues 28–48 (LLTPVYSVVLVVGLPLNICVI). The Cytoplasmic portion of the chain corresponds to 49–62 (AQICASRRTLTRSA). The helical transmembrane segment at 63 to 83 (VYTLNLALADLMYACSLPLLI) threads the bilayer. Over 84 to 101 (YNYARGDHWPFGDLACRF) the chain is Extracellular. An intrachain disulfide couples Cys99 to Cys177. Residues 102–122 (VRFLFYANLHGSILFLTCISF) traverse the membrane as a helical segment. Topologically, residues 123–144 (QRYLGICHPLASWHKRGGRRAA) are cytoplasmic. The helical transmembrane segment at 145–165 (WVVCGVVWLAVTAQCLPTAVF) threads the bilayer. At 166-194 (AATGIQRNRTVCYDLSPPILSTRYLPYGM) the chain is on the extracellular side. A glycan (N-linked (GlcNAc...) asparagine) is linked at Asn173. The chain crosses the membrane as a helical span at residues 195–215 (ALTVIGFLLPFIALLACYCRM). Residues 216–236 (ARRLCRQDGPAGPVAQERRSK) lie on the Cytoplasmic side of the membrane. The helical transmembrane segment at 237–257 (AARMAVVVAAVFAISFLPFHI) threads the bilayer. The Extracellular portion of the chain corresponds to 258-280 (TKTAYLAVRSTPGVSCPVLETFA). Residues 281–303 (AAYKGTRPFASVNSVLDPILFYF) form a helical membrane-spanning segment. Residues 304–328 (TQQKFRRQPHDLLQRLTAKWQRQRV) lie on the Cytoplasmic side of the membrane.

Belongs to the G-protein coupled receptor 1 family.

The protein localises to the cell membrane. In terms of biological role, receptor for extracellular UTP &gt; ADP = 2-methylthio-ATP &gt; ADP-beta-S &gt; ATP = ATP-gamma-S. The activity of this receptor is mediated by G proteins which activate a phosphatidylinositol-calcium second messenger system. Functionally coupled to phospholipase C. This is P2Y purinoceptor 6 (P2ry6) from Mus musculus (Mouse).